A 447-amino-acid polypeptide reads, in one-letter code: Glutamine synthetase (447 aa).

The region spanning 20–105 (RDVKFIRTQF…ILGDVYLPDG (86 aa)) is the GS beta-grasp domain. The GS catalytic domain maps to 112-447 (PRYVLKTAIK…WELSRYLSML (336 aa)). E135 and E137 together coordinate Mg(2+). Residue E187 coordinates ATP. Residues E192 and E199 each coordinate Mg(2+). L-glutamate contacts are provided by residues 243-244 (NG) and G244. H248 is a Mg(2+) binding site. S252 contacts ATP. L-glutamate contacts are provided by R301, E307, and R319. R319 and R324 together coordinate ATP. E336 is a binding site for Mg(2+). Position 338 (R338) interacts with L-glutamate.

It belongs to the glutamine synthetase family. As to quaternary structure, homohexamer. Interacts and forms stable complexes with the regulatory protein GlnK1. Requires Mg(2+) as cofactor.

It is found in the cytoplasm. It carries out the reaction L-glutamate + NH4(+) + ATP = L-glutamine + ADP + phosphate + H(+). Its activity is regulated as follows. Directly stimulated by the effector molecule 2-oxoglutarate. Inhibited by GlnK1. 2-oxoglutarate antagonizes the inhibitory effects of GlnK1, but does not prevent GlnK1/GlnA1 complex formation. Probably involved in nitrogen metabolism via ammonium assimilation. Catalyzes the ATP-dependent biosynthesis of glutamine from glutamate and ammonia. In Methanosarcina mazei (strain ATCC BAA-159 / DSM 3647 / Goe1 / Go1 / JCM 11833 / OCM 88) (Methanosarcina frisia), this protein is Glutamine synthetase.